A 30-amino-acid polypeptide reads, in one-letter code: Platelet factor 4 (30 aa).

This sequence belongs to the intercrine alpha (chemokine CxC) family. Homotetramer. Interacts with TNFAIP6 (via Link domain). Interacts with CCR1. Interacts with CXCR3. Post-translationally, binds non-covalently to a proteoglycan molecule.

Its subcellular location is the secreted. Chemokine released during platelet aggregation that plays a role in different biological processes including hematopoiesis, cell proliferation, differentiation, and activation. Acts via different functional receptors including CCR1, CXCR3A or CXCR3B. Upon interaction with CXCR3A receptor, induces activated T-lymphocytes migration mediated via downstream Ras/extracellular signal-regulated kinase (ERK) signaling. Neutralizes the anticoagulant effect of heparin by binding more strongly to heparin than to the chondroitin-4-sulfate chains of the carrier molecule. Plays a role in the inhibition of hematopoiesis and in the maintenance of hematopoietic stem cell (HSC) quiescence. Chemotactic for neutrophils and monocytes via CCR1. Inhibits endothelial cell proliferation. In cooperation with toll-like receptor 8/TLR8, induces chromatin remodeling and activates inflammatory gene expression via the TBK1-IRF5 axis. In addition, induces myofibroblast differentiation and collagen synthesis in different precursor cells, including endothelial cells, by stimulating endothelial-to-mesenchymal transition. This chain is Platelet factor 4 (PF4), found in Oryctolagus cuniculus (Rabbit).